The chain runs to 241 residues: Small ribosomal subunit protein eS4 (241 aa).

Positions 37–99 (IPLGLLLRDY…ADLYLRIVPD (63 aa)) constitute an S4 RNA-binding domain.

It belongs to the eukaryotic ribosomal protein eS4 family.

The protein is Small ribosomal subunit protein eS4 of Metallosphaera sedula (strain ATCC 51363 / DSM 5348 / JCM 9185 / NBRC 15509 / TH2).